The primary structure comprises 67 residues: UPF0437 protein y4xE (67 aa).

This sequence belongs to the UPF0437 family.

This chain is UPF0437 protein y4xE, found in Sinorhizobium fredii (strain NBRC 101917 / NGR234).